A 161-amino-acid chain; its full sequence is Anthrone oxygenase tpcL (161 aa).

Asn-4 is a glycosylation site (N-linked (GlcNAc...) asparagine). Transmembrane regions (helical) follow at residues 15–35, 56–74, 87–107, and 136–155; these read VITG…DIPV, IGHK…LYGY, LPHI…WLVM, and WAQL…VLGL.

The protein belongs to the anthrone oxygenase family. In terms of tissue distribution, specifically expressed in conidia.

Its subcellular location is the membrane. The catalysed reaction is emodin anthrone + O2 = emodin + H2O + H(+). The protein operates within secondary metabolite biosynthesis. In terms of biological role, anthrone oxygenase; part of the gene cluster that mediates the biosynthesis of trypacidin, a mycotoxin with antiprotozoal activity and that plays a role in the infection process. The pathway begins with the synthesis of atrochrysone thioester by the polyketide synthase (PKS) tpcC. The atrochrysone carboxyl ACP thioesterase tpcB then breaks the thioester bond and releases the atrochrysone carboxylic acid from tpcC. The decarboxylase tpcK converts atrochrysone carboxylic acid to atrochrysone which is further reduced into emodin anthrone. The next step is performed by the emodin anthrone oxygenase tpcL that catalyzes the oxidation of emodinanthrone to emodin. Emodin O-methyltransferase encoded by tpcA catalyzes methylation of the 8-hydroxy group of emodin to form questin. Ring cleavage of questin by questin oxidase tpcI leads to desmethylsulochrin via several intermediates including questin epoxide. Another methylation step catalyzed by tpcM leads to the formation of sulochrin which is further converted to monomethylsulfochrin by tpcH. Finally, the tpcJ catalyzes the conversion of monomethylsulfochrin to trypacidin. Trypacidin is toxic for human pulmonary and bronchial epithelial cells by initiating the intracellular formation of nitric oxide (NO) and hydrogen peroxide (H(2)O(2)), thus triggering host necrotic cell death. The trypacidin pathway is also able to produce endocrocin via a distinct route from the endocrocin Enc pathway. The protein is Anthrone oxygenase tpcL of Aspergillus fumigatus (strain ATCC MYA-4609 / CBS 101355 / FGSC A1100 / Af293) (Neosartorya fumigata).